A 389-amino-acid polypeptide reads, in one-letter code: MEGLCLNLDCSELPNSSWVNSSMENQNHSSNSTRDPLKRNEEVAKVEVTVLALILFLALAGNICVLLGIYINRHKHSRMYFFMKHLSIADLVVAIFQVLPQLIWDITFRFYAPDLVCRLVTYLQVVGMFASTYMLLLMSLDRCLAICQPLRSLHRRSDCVYVLFTWILSFLLSTPQTVIFSLTEVGNGVYDCRADFIQPWGPKAYITWITLAVYIIPVMILSVCYGLISYKIWQNIRLKTVCESNLRLSTSRRATLSRVSSVRLISKAKIRTVKMTFIIVLAYIVCWTPFFFVQMWSVWDPNPPKEASLFIIAMLLGSLNSCCNPWIYMLFTGHLFHDLLQSFLCCSARYLKTQQQGSDLSASRKSNSSTFVLSRKSSSQKSITQPSTA.

Topologically, residues 1–50 are extracellular; the sequence is MEGLCLNLDCSELPNSSWVNSSMENQNHSSNSTRDPLKRNEEVAKVEVTV. 4 N-linked (GlcNAc...) asparagine glycosylation sites follow: Asn-15, Asn-20, Asn-27, and Asn-31. The helical transmembrane segment at 51–71 threads the bilayer; that stretch reads LALILFLALAGNICVLLGIYI. Residues 72–87 lie on the Cytoplasmic side of the membrane; the sequence is NRHKHSRMYFFMKHLS. Residues 88 to 108 form a helical membrane-spanning segment; sequence IADLVVAIFQVLPQLIWDITF. At 109-119 the chain is on the extracellular side; it reads RFYAPDLVCRL. Cys-117 and Cys-192 form a disulfide bridge. The helical transmembrane segment at 120 to 140 threads the bilayer; that stretch reads VTYLQVVGMFASTYMLLLMSL. Topologically, residues 141 to 159 are cytoplasmic; the sequence is DRCLAICQPLRSLHRRSDC. The helical transmembrane segment at 160–180 threads the bilayer; sequence VYVLFTWILSFLLSTPQTVIF. Topologically, residues 181-207 are extracellular; the sequence is SLTEVGNGVYDCRADFIQPWGPKAYIT. Residues 208 to 228 traverse the membrane as a helical segment; the sequence is WITLAVYIIPVMILSVCYGLI. The Cytoplasmic portion of the chain corresponds to 229–275; sequence SYKIWQNIRLKTVCESNLRLSTSRRATLSRVSSVRLISKAKIRTVKM. Residues 276-296 traverse the membrane as a helical segment; it reads TFIIVLAYIVCWTPFFFVQMW. Residues 297-308 are Extracellular-facing; sequence SVWDPNPPKEAS. A helical transmembrane segment spans residues 309–329; it reads LFIIAMLLGSLNSCCNPWIYM. At 330–389 the chain is on the cytoplasmic side; it reads LFTGHLFHDLLQSFLCCSARYLKTQQQGSDLSASRKSNSSTFVLSRKSSSQKSITQPSTA. Positions 360–389 are disordered; the sequence is LSASRKSNSSTFVLSRKSSSQKSITQPSTA.

Belongs to the G-protein coupled receptor 1 family. Vasopressin/oxytocin receptor subfamily. As to expression, highly expressed in the bladder. Also expressed in kidney, brain and skeletal muscle.

It localises to the cell membrane. Functionally, binds to mesotocin and may play a role in the regulation of water and salt transport. This is Mesotocin receptor from Rhinella marina (Cane toad).